The primary structure comprises 351 residues: Hydroxymethylglutaryl-CoA synthase (351 aa).

Glu80 functions as the Proton donor/acceptor in the catalytic mechanism. Residue Cys112 is the Acyl-thioester intermediate of the active site. Residues Cys112 and Ser153 each coordinate (3S)-3-hydroxy-3-methylglutaryl-CoA. A CoA-binding site is contributed by Arg199. (3S)-3-hydroxy-3-methylglutaryl-CoA-binding residues include Thr201 and His234. Residue His234 is the Proton donor/acceptor of the active site. Residue Lys239 participates in CoA binding. (3S)-3-hydroxy-3-methylglutaryl-CoA contacts are provided by Arg243, Asn266, and Ser296.

Belongs to the thiolase-like superfamily. Archaeal HMG-CoA synthase family. Interacts with acetoacetyl-CoA thiolase that catalyzes the precedent step in the pathway and with a DUF35 protein. The acetoacetyl-CoA thiolase/HMG-CoA synthase complex channels the intermediate via a fused CoA-binding site, which allows for efficient coupling of the endergonic thiolase reaction with the exergonic HMGCS reaction.

The enzyme catalyses acetoacetyl-CoA + acetyl-CoA + H2O = (3S)-3-hydroxy-3-methylglutaryl-CoA + CoA + H(+). It participates in metabolic intermediate biosynthesis; (R)-mevalonate biosynthesis; (R)-mevalonate from acetyl-CoA: step 2/3. In terms of biological role, catalyzes the condensation of acetyl-CoA with acetoacetyl-CoA to form 3-hydroxy-3-methylglutaryl-CoA (HMG-CoA). Functions in the mevalonate (MVA) pathway leading to isopentenyl diphosphate (IPP), a key precursor for the biosynthesis of isoprenoid compounds that are building blocks of archaeal membrane lipids. In Thermoplasma acidophilum (strain ATCC 25905 / DSM 1728 / JCM 9062 / NBRC 15155 / AMRC-C165), this protein is Hydroxymethylglutaryl-CoA synthase.